We begin with the raw amino-acid sequence, 476 residues long: Serine protease HTRA4 (476 aa).

An N-terminal signal peptide occupies residues 1-31 (MIRPQLRTAGLGRCLLPGLLLLLVPVLWAGA). Positions 36 to 109 (TQPSCPAVCQ…PGFPSTCGCP (74 aa)) constitute an IGFBP N-terminal domain. Disulfide bonds link cysteine 40–cysteine 66, cysteine 44–cysteine 68, cysteine 49–cysteine 69, cysteine 55–cysteine 72, cysteine 80–cysteine 94, cysteine 88–cysteine 106, cysteine 108–cysteine 127, and cysteine 116–cysteine 152. Residues 88-154 (CAPGLQCLQP…VPVQWGNCGD (67 aa)) enclose the Kazal-like domain. The interval 202–362 (GSGFIVSEDG…IPSDRVRQFL (161 aa)) is serine protease. Catalysis depends on charge relay system residues histidine 218, aspartate 248, and serine 326. Residues 383-474 (LQMLSLTVPL…NLLLTVIPET (92 aa)) enclose the PDZ domain.

Belongs to the peptidase S1C family.

The protein resides in the secreted. Serine protease. In Homo sapiens (Human), this protein is Serine protease HTRA4 (HTRA4).